The chain runs to 158 residues: Putative metalloproteinase inhibitor tag-225 (158 aa).

Residues 1-20 form the signal peptide; it reads MQNLSLSLVILSVLIAVTLA. Residue C21 coordinates Zn(2+). The segment at 21–25 is involved in metalloproteinase-binding; sequence CKCRE. Disulfide bonds link C21-C96, C23-C123, and C33-C158. The 138-residue stretch at 21 to 158 folds into the NTR domain; that stretch reads CKCREQSTKE…LQSQVKSIKC (138 aa). N79 is a glycosylation site (N-linked (GlcNAc...) asparagine). Residues 93-94 are involved in metalloproteinase-binding; sequence AP.

The protein belongs to the protease inhibitor I35 (TIMP) family.

It localises to the secreted. In terms of biological role, complexes with metalloproteinases and irreversibly inactivates them by binding to their catalytic zinc cofactor. This Caenorhabditis elegans protein is Putative metalloproteinase inhibitor tag-225 (tag-225).